The following is a 118-amino-acid chain: Basic phospholipase A2 homolog 1 (118 aa).

7 cysteine pairs are disulfide-bonded: cysteine 11–cysteine 71, cysteine 27–cysteine 117, cysteine 29–cysteine 45, cysteine 44–cysteine 98, cysteine 51–cysteine 91, cysteine 60–cysteine 84, and cysteine 78–cysteine 89. The important for membrane-damaging activities in eukaryotes and bacteria; heparin-binding stretch occupies residues 106–118 (NKNFNIDTKKRCK).

The protein belongs to the phospholipase A2 family. Group I subfamily. D49 sub-subfamily. Expressed by the venom gland.

The protein resides in the secreted. The sequence is that of Basic phospholipase A2 homolog 1 from Laticauda colubrina (Yellow-lipped sea krait).